A 232-amino-acid chain; its full sequence is Enolase-phosphatase E1 (232 aa).

Belongs to the HAD-like hydrolase superfamily. MasA/MtnC family. Monomer. The cofactor is Mg(2+).

It carries out the reaction 5-methylsulfanyl-2,3-dioxopentyl phosphate + H2O = 1,2-dihydroxy-5-(methylsulfanyl)pent-1-en-3-one + phosphate. The protein operates within amino-acid biosynthesis; L-methionine biosynthesis via salvage pathway; L-methionine from S-methyl-5-thio-alpha-D-ribose 1-phosphate: step 3/6. It functions in the pathway amino-acid biosynthesis; L-methionine biosynthesis via salvage pathway; L-methionine from S-methyl-5-thio-alpha-D-ribose 1-phosphate: step 4/6. Its function is as follows. Bifunctional enzyme that catalyzes the enolization of 2,3-diketo-5-methylthiopentyl-1-phosphate (DK-MTP-1-P) into the intermediate 2-hydroxy-3-keto-5-methylthiopentenyl-1-phosphate (HK-MTPenyl-1-P), which is then dephosphorylated to form the acireductone 1,2-dihydroxy-3-keto-5-methylthiopentene (DHK-MTPene). This chain is Enolase-phosphatase E1, found in Xanthomonas campestris pv. campestris (strain 8004).